The sequence spans 83 residues: Exodeoxyribonuclease 7 small subunit (83 aa).

The protein belongs to the XseB family. In terms of assembly, heterooligomer composed of large and small subunits.

It is found in the cytoplasm. It catalyses the reaction Exonucleolytic cleavage in either 5'- to 3'- or 3'- to 5'-direction to yield nucleoside 5'-phosphates.. Bidirectionally degrades single-stranded DNA into large acid-insoluble oligonucleotides, which are then degraded further into small acid-soluble oligonucleotides. The polypeptide is Exodeoxyribonuclease 7 small subunit (Rhizobium rhizogenes (strain K84 / ATCC BAA-868) (Agrobacterium radiobacter)).